Reading from the N-terminus, the 347-residue chain is NADH-ubiquinone oxidoreductase chain 2 (347 aa).

Helical transmembrane passes span 1–21 (MNPL…VIVM), 25–45 (HWLT…PMLM), 59–79 (YFLT…INLT), 96–116 (IIMT…FWVP), 127–147 (CLIL…MISP), 149–169 (INLN…GWGG), 178–198 (IMAY…AYNP), 200–220 (MTML…MLLI), 237–257 (IPLV…LPPL), 276–296 (IILP…YMRL), and 325–345 (LLSP…TMLL).

Belongs to the complex I subunit 2 family. In terms of assembly, core subunit of respiratory chain NADH dehydrogenase (Complex I) which is composed of 45 different subunits. Interacts with TMEM242.

The protein resides in the mitochondrion inner membrane. The enzyme catalyses a ubiquinone + NADH + 5 H(+)(in) = a ubiquinol + NAD(+) + 4 H(+)(out). Core subunit of the mitochondrial membrane respiratory chain NADH dehydrogenase (Complex I) which catalyzes electron transfer from NADH through the respiratory chain, using ubiquinone as an electron acceptor. Essential for the catalytic activity and assembly of complex I. This Natalus tumidirostris (Trinidadian funnel-eared bat) protein is NADH-ubiquinone oxidoreductase chain 2.